Consider the following 459-residue polypeptide: Cysteine desulfurase (459 aa).

Residues methionine 1–arginine 17 constitute a mitochondrion transit peptide. 5 residues coordinate pyridoxal 5'-phosphate: alanine 129, threonine 130, glutamine 237, serine 257, and histidine 259. Position 260 is an N6-(pyridoxal phosphate)lysine (lysine 260). Pyridoxal 5'-phosphate is bound at residue threonine 297. The active-site Cysteine persulfide intermediate is the cysteine 383. Residue cysteine 383 coordinates [2Fe-2S] cluster. A Zn(2+)-binding site is contributed by cysteine 383. Cysteine 383 carries the cysteine persulfide modification.

This sequence belongs to the class-V pyridoxal-phosphate-dependent aminotransferase family. NifS/IscS subfamily. Homodimer. Component of the mitochondrial core iron-sulfur cluster (ISC) complex composed of NFS1, LYRM4, NDUFAB1, ISCU, FXN, and FDX2; this complex is a heterohexamer containing two copies of each monomer. Component of cyteine desulfurase complex composed of NFS1, LYRM4 and NDUFAB1; this complex contributes to the activation of cysteine desulfurase activity and NFS1 stabilization. Interacts (homodimer form) with ISCU (D-state); each monomer interacts with the C-terminal regions of each NFS1 monomer. Interacts with HSPA9. Interacts (via homodimer form) with FDX2. Interacts (via homodimer form) with FXN. Interacts with LYRM4. Component of a complex composed of FXN, NFS1, LYRM4 and ISCU. The cofactor is pyridoxal 5'-phosphate. Post-translationally, N-gluconoylated. In terms of processing, cysteine persulfide intermediate is reduced by thiol-containing molecules like glutathione and L-cysteine. Persulfide reduction is a rate-limiting step of cysteine desulfurase catalytic cycle. As to expression, ubiquitous.

It localises to the mitochondrion. It catalyses the reaction (sulfur carrier)-H + L-cysteine = (sulfur carrier)-SH + L-alanine. The catalysed reaction is L-cysteinyl-[cysteine desulfurase] + L-cysteine = S-sulfanyl-L-cysteinyl-[cysteine desulfurase] + L-alanine. With respect to regulation, active only in complex with LYRM4. Its function is as follows. Mitochondrial cysteine desulfurase, of the core iron-sulfur cluster (ISC) assembly complex, that catalyzes the desulfuration of L-cysteine to L-alanine, as component of the cysteine desulfurase complex, leading to the formation of a cysteine persulfide intermediate at the active site cysteine residue and participates in the [2Fe-2S] clusters assembly on the scaffolding protein ISCU. The persulfide is then transferred on the flexible Cys loop from the catalytic site of NFS1 to the surface of NFS1. After the NFS1-linked persulfide sulfur is transferred to one of the conserved Cys residues of the scaffold, a reaction assisted by FXN. The core iron-sulfur cluster (ISC) assembly complex is involved in the de novo synthesis of a [2Fe-2S] cluster, the first step of the mitochondrial iron-sulfur protein biogenesis. This process is initiated by the cysteine desulfurase complex (NFS1:LYRM4:NDUFAB1) that produces persulfide which is delivered on the scaffold protein ISCU in a FXN-dependent manner. Then this complex is stabilized by FDX2 which provides reducing equivalents to accomplish the [2Fe-2S] cluster assembly. Finally, the [2Fe-2S] cluster is transferred from ISCU to chaperone proteins, including HSCB, HSPA9 and GLRX5. This is Cysteine desulfurase from Mus musculus (Mouse).